The sequence spans 239 residues: MVEPKYKRVILKLSGEALGGEKGFGIDWEVVESIAEEISKVRELGVEVAIVVGGGNFFRGRSAEHIDRATADYMGMLATVINSLALQSILEKRGIPTRVQSAIEMRQIAEPYIRRRAIRHLEKGRVVIFACGTGNPFFSTDTAAALRAAEIDAEAILLAKKVDGVYDSDPKKNPNAKKYDFITYLDVINQRLEVMDSTATSMCMDNQIPIVVFELAKGNIIKAVMGENIGTLVNVKEER.

ATP is bound at residue K12–G15. The interval G20 to G25 is involved in allosteric activation by GTP. G54 serves as a coordination point for UMP. G55 and R59 together coordinate ATP. UMP is bound by residues D72 and T133–T140. Y166 and D169 together coordinate ATP.

It belongs to the UMP kinase family. In terms of assembly, homohexamer.

The protein localises to the cytoplasm. The enzyme catalyses UMP + ATP = UDP + ADP. It participates in pyrimidine metabolism; CTP biosynthesis via de novo pathway; UDP from UMP (UMPK route): step 1/1. Its activity is regulated as follows. Allosterically activated by GTP. Inhibited by UTP. Functionally, catalyzes the reversible phosphorylation of UMP to UDP. The polypeptide is Uridylate kinase (Caldicellulosiruptor saccharolyticus (strain ATCC 43494 / DSM 8903 / Tp8T 6331)).